Consider the following 498-residue polypeptide: Mitogen-activated protein kinase 15 (498 aa).

The Protein kinase domain maps to 13–304 (YKIEEVIGKG…AEEALADPYF (292 aa)). Residues 19–27 (IGKGSYGVV) and Lys-42 each bind ATP. Asp-139 serves as the catalytic Proton acceptor. Thr-175 carries the post-translational modification Phosphothreonine. The short motif at 175 to 177 (TDY) is the TXY element. Position 177 is a phosphotyrosine (Tyr-177). 2 disordered regions span residues 388 to 411 (STAAPPERQHNSLPRPSVLYSDDR) and 470 to 498 (STAEQYEHRRTDRNPALATNTVSPRGSYP). Positions 486 to 498 (LATNTVSPRGSYP) are enriched in polar residues.

This sequence belongs to the protein kinase superfamily. CMGC Ser/Thr protein kinase family. MAP kinase subfamily. Post-translationally, dually phosphorylated on Thr-175 and Tyr-177, which activates the enzyme.

The enzyme catalyses L-seryl-[protein] + ATP = O-phospho-L-seryl-[protein] + ADP + H(+). It carries out the reaction L-threonyl-[protein] + ATP = O-phospho-L-threonyl-[protein] + ADP + H(+). Its activity is regulated as follows. Activated by threonine and tyrosine phosphorylation. This is Mitogen-activated protein kinase 15 (MPK15) from Oryza sativa subsp. japonica (Rice).